Consider the following 283-residue polypeptide: Cyclin-C (283 aa).

One can recognise a Cyclin N-terminal domain in the interval 46-144; it reads NVIQALGEHL…ILECEFYLLE (99 aa). Residues 252–283 are disordered; that stretch reads SILSKMPKPKPPPNSDGEQGTNGSQSSGYSQS. Residues 267 to 283 are compositionally biased toward polar residues; that stretch reads DGEQGTNGSQSSGYSQS.

Belongs to the cyclin family. Cyclin C subfamily. As to quaternary structure, component of the Mediator complex. The cylin/CDK pair formed by ccnc/cdk8 also associates with the large subunit of RNA polymerase II.

Its subcellular location is the nucleus. Component of the Mediator complex, a coactivator involved in regulated gene transcription of nearly all RNA polymerase II-dependent genes. Mediator functions as a bridge to convey information from gene-specific regulatory proteins to the basal RNA polymerase II transcription machinery. Mediator is recruited to promoters by direct interactions with regulatory proteins and serves as a scaffold for the assembly of a functional preinitiation complex with RNA polymerase II and the general transcription factors. Binds to and activates cyclin-dependent kinase cdk8 that phosphorylates the CTD (C-terminal domain) of the large subunit of RNA polymerase II (RNAp II), which may inhibit the formation of a transcription initiation complex. This is Cyclin-C (ccnc) from Xenopus laevis (African clawed frog).